The sequence spans 462 residues: Alkaline phosphatase 3 (462 aa).

A signal peptide spans 1-32 (MKKFPKKLLPIAVLSSIAFSSLASGSVPEASA). D52 is a Mg(2+) binding site. D52 lines the Zn(2+) pocket. The active-site Phosphoserine intermediate is S101. T154 and E275 together coordinate Mg(2+). 5 residues coordinate Zn(2+): D280, H284, D322, H323, and H419.

Belongs to the alkaline phosphatase family. In terms of assembly, monomer. Requires Mg(2+) as cofactor. The cofactor is Zn(2+).

The enzyme catalyses a phosphate monoester + H2O = an alcohol + phosphate. The protein is Alkaline phosphatase 3 (phoB) of Bacillus subtilis (strain 168).